A 253-amino-acid polypeptide reads, in one-letter code: 5'-nucleotidase SurE (253 aa).

A divalent metal cation contacts are provided by aspartate 8, aspartate 9, serine 39, and asparagine 96.

The protein belongs to the SurE nucleotidase family. It depends on a divalent metal cation as a cofactor.

Its subcellular location is the cytoplasm. The catalysed reaction is a ribonucleoside 5'-phosphate + H2O = a ribonucleoside + phosphate. Its function is as follows. Nucleotidase that shows phosphatase activity on nucleoside 5'-monophosphates. This is 5'-nucleotidase SurE from Rhodopirellula baltica (strain DSM 10527 / NCIMB 13988 / SH1).